Here is a 416-residue protein sequence, read N- to C-terminus: Gamma-glutamyl phosphate reductase (416 aa).

This sequence belongs to the gamma-glutamyl phosphate reductase family.

Its subcellular location is the cytoplasm. The catalysed reaction is L-glutamate 5-semialdehyde + phosphate + NADP(+) = L-glutamyl 5-phosphate + NADPH + H(+). Its pathway is amino-acid biosynthesis; L-proline biosynthesis; L-glutamate 5-semialdehyde from L-glutamate: step 2/2. Its function is as follows. Catalyzes the NADPH-dependent reduction of L-glutamate 5-phosphate into L-glutamate 5-semialdehyde and phosphate. The product spontaneously undergoes cyclization to form 1-pyrroline-5-carboxylate. The sequence is that of Gamma-glutamyl phosphate reductase from Vibrio vulnificus (strain YJ016).